A 235-amino-acid polypeptide reads, in one-letter code: tRNA (guanine-N(1)-)-methyltransferase (235 aa).

S-adenosyl-L-methionine contacts are provided by residues glycine 114 and 134–139 (IGDYIL).

It belongs to the RNA methyltransferase TrmD family. Homodimer.

It localises to the cytoplasm. The catalysed reaction is guanosine(37) in tRNA + S-adenosyl-L-methionine = N(1)-methylguanosine(37) in tRNA + S-adenosyl-L-homocysteine + H(+). In terms of biological role, specifically methylates guanosine-37 in various tRNAs. The protein is tRNA (guanine-N(1)-)-methyltransferase of Ehrlichia ruminantium (strain Welgevonden).